Consider the following 816-residue polypeptide: Lon protease (816 aa).

The Lon N-terminal domain occupies 40-244 (VPLIAVPSHP…KVLELLYEEL (205 aa)). 398 to 405 (GPPGVGKT) provides a ligand contact to ATP. The Lon proteolytic domain maps to 636–816 (AMSPGMVMGL…SMKEVIKLLF (181 aa)). Residues serine 724 and lysine 767 contribute to the active site.

The protein belongs to the peptidase S16 family. As to quaternary structure, homohexamer. Organized in a ring with a central cavity.

The protein resides in the cytoplasm. It catalyses the reaction Hydrolysis of proteins in presence of ATP.. In terms of biological role, ATP-dependent serine protease that mediates the selective degradation of mutant and abnormal proteins as well as certain short-lived regulatory proteins. Required for cellular homeostasis and for survival from DNA damage and developmental changes induced by stress. Degrades polypeptides processively to yield small peptide fragments that are 5 to 10 amino acids long. Binds to DNA in a double-stranded, site-specific manner. The protein is Lon protease of Borrelia duttonii (strain Ly).